A 179-amino-acid polypeptide reads, in one-letter code: Acireductone dioxygenase (179 aa).

The disordered stretch occupies residues 1 to 23 (MVQAWYMDESTADPRMPHRAQPD). Fe(2+) contacts are provided by His88, His90, Glu94, and His133. Residues His88, His90, Glu94, and His133 each coordinate Ni(2+).

The protein belongs to the acireductone dioxygenase (ARD) family. As to quaternary structure, monomer. Interacts with MMP14. Fe(2+) serves as cofactor. The cofactor is Ni(2+). In terms of tissue distribution, detected in prostate, liver, heart, brain, muscle, kidney and seminal vesicles.

It localises to the cytoplasm. It is found in the nucleus. The protein resides in the cell membrane. The enzyme catalyses 1,2-dihydroxy-5-(methylsulfanyl)pent-1-en-3-one + O2 = 4-methylsulfanyl-2-oxobutanoate + formate + 2 H(+). It catalyses the reaction 1,2-dihydroxy-5-(methylsulfanyl)pent-1-en-3-one + O2 = 3-(methylsulfanyl)propanoate + CO + formate + 2 H(+). It functions in the pathway amino-acid biosynthesis; L-methionine biosynthesis via salvage pathway; L-methionine from S-methyl-5-thio-alpha-D-ribose 1-phosphate: step 5/6. Its function is as follows. Catalyzes 2 different reactions between oxygen and the acireductone 1,2-dihydroxy-3-keto-5-methylthiopentene (DHK-MTPene) depending upon the metal bound in the active site. Fe-containing acireductone dioxygenase (Fe-ARD) produces formate and 2-keto-4-methylthiobutyrate (KMTB), the alpha-ketoacid precursor of methionine in the methionine recycle pathway. Ni-containing acireductone dioxygenase (Ni-ARD) produces methylthiopropionate, carbon monoxide and formate, and does not lie on the methionine recycle pathway. Also down-regulates cell migration mediated by MMP14. This is Acireductone dioxygenase (Adi1) from Rattus norvegicus (Rat).